Here is a 262-residue protein sequence, read N- to C-terminus: Nodulation protein J (262 aa).

One can recognise an ABC transmembrane type-2 domain in the interval 33-259; it reads ASLLGHLAEP…FLSTALLRRR (227 aa). 6 helical membrane-spanning segments follow: residues 35-55, 60-80, 125-145, 148-168, 177-197, and 231-251; these read LLGH…GLGV, VGGV…SAMT, AALA…TQWL, LYAL…GMVV, YFIF…GAVF, and VVDV…PFFL.

Belongs to the ABC-2 integral membrane protein family. Lipooligosaccharide exporter (TC 3.A.1.102) subfamily. In terms of assembly, the complex is composed of two ATP-binding proteins (NodI) and two transmembrane proteins (NodJ).

The protein localises to the cell inner membrane. Functionally, part of the ABC transporter complex NodIJ involved in the export of the nodulation factors (Nod factors), the bacterial signal molecules that induce symbiosis and subsequent nodulation induction. Nod factors are LCO (lipo-chitin oligosaccharide), a modified beta-1,4-linked N-acetylglucosamine oligosaccharide. This subunit encodes the transporter. The protein is Nodulation protein J (nodJ) of Rhizobium leguminosarum bv. trifolii.